The chain runs to 243 residues: Carboxy-S-adenosyl-L-methionine synthase (243 aa).

Residues Tyr-35, 68–70 (GCS), 92–93 (DN), and Arg-199 each bind S-adenosyl-L-methionine.

It belongs to the class I-like SAM-binding methyltransferase superfamily. Cx-SAM synthase family. As to quaternary structure, homodimer.

It catalyses the reaction prephenate + S-adenosyl-L-methionine = carboxy-S-adenosyl-L-methionine + 3-phenylpyruvate + H2O. Functionally, catalyzes the conversion of S-adenosyl-L-methionine (SAM) to carboxy-S-adenosyl-L-methionine (Cx-SAM). The chain is Carboxy-S-adenosyl-L-methionine synthase from Helicobacter pylori (strain P12).